Reading from the N-terminus, the 176-residue chain is Inorganic pyrophosphatase (176 aa).

Substrate-binding residues include Lys30, Arg44, and Tyr56. The Mg(2+) site is built by Asp66, Asp71, and Asp103. Tyr142 contributes to the substrate binding site.

Belongs to the PPase family. Homohexamer. Mg(2+) serves as cofactor.

The protein localises to the cytoplasm. It carries out the reaction diphosphate + H2O = 2 phosphate + H(+). Functionally, catalyzes the hydrolysis of inorganic pyrophosphate (PPi) forming two phosphate ions. The polypeptide is Inorganic pyrophosphatase (Salmonella typhi).